The chain runs to 334 residues: Spermatogenesis-associated protein 32 (334 aa).

Residues 24 to 98 (SDHHRHHHHH…TESPEQQNYR (75 aa)) are disordered. The segment covering 37–47 (ENEDEDTEVEA) has biased composition (acidic residues). Residues 48-60 (ELPRTEPPPKVDP) show a composition bias toward basic and acidic residues. The span at 77–98 (SKTTPETEGDSYTESPEQQNYR) shows a compositional bias: polar residues. 2 positions are modified to phosphoserine: Ser135 and Ser138.

As to quaternary structure, interacts with syntaxin-1 and ACTB. Highly expressed in the testis and weakly in the brain and heart.

The sequence is that of Spermatogenesis-associated protein 32 (Spata32) from Mus musculus (Mouse).